Consider the following 309-residue polypeptide: Porphobilinogen deaminase (309 aa).

C241 bears the S-(dipyrrolylmethanemethyl)cysteine mark.

The protein belongs to the HMBS family. Monomer. The cofactor is dipyrromethane.

It carries out the reaction 4 porphobilinogen + H2O = hydroxymethylbilane + 4 NH4(+). The protein operates within porphyrin-containing compound metabolism; protoporphyrin-IX biosynthesis; coproporphyrinogen-III from 5-aminolevulinate: step 2/4. Functionally, tetrapolymerization of the monopyrrole PBG into the hydroxymethylbilane pre-uroporphyrinogen in several discrete steps. The polypeptide is Porphobilinogen deaminase (Campylobacter concisus (strain 13826)).